The chain runs to 486 residues: Phosphomethylpyrimidine synthase (486 aa).

Residues Asn-80, Met-109, Tyr-139, His-175, 195–197, 236–239, and Glu-275 each bind substrate; these read SRG and DSLR. Residue His-279 participates in Zn(2+) binding. Tyr-329 contacts substrate. His-370 lines the Zn(2+) pocket. [4Fe-4S] cluster is bound by residues Cys-450, Cys-453, and Cys-458.

It belongs to the ThiC family. Requires [4Fe-4S] cluster as cofactor.

It catalyses the reaction 5-amino-1-(5-phospho-beta-D-ribosyl)imidazole + S-adenosyl-L-methionine = 4-amino-2-methyl-5-(phosphooxymethyl)pyrimidine + CO + 5'-deoxyadenosine + formate + L-methionine + 3 H(+). It participates in cofactor biosynthesis; thiamine diphosphate biosynthesis. In terms of biological role, catalyzes the synthesis of the hydroxymethylpyrimidine phosphate (HMP-P) moiety of thiamine from aminoimidazole ribotide (AIR) in a radical S-adenosyl-L-methionine (SAM)-dependent reaction. This chain is Phosphomethylpyrimidine synthase, found in Trichodesmium erythraeum (strain IMS101).